Consider the following 249-residue polypeptide: Triosephosphate isomerase (249 aa).

Positions 12 and 14 each coordinate substrate. Lysine 14 is subject to N6-acetyllysine. Position 68 is a 3'-nitrotyrosine (tyrosine 68). Residue serine 80 is modified to Phosphoserine. The active-site Electrophile is the histidine 96. Phosphoserine is present on serine 106. Residue lysine 142 forms a Glycyl lysine isopeptide (Lys-Gly) (interchain with G-Cter in SUMO1) linkage. Lysine 149 carries the N6-succinyllysine modification. Lysine 156 carries the post-translational modification N6-acetyllysine; alternate. Residue lysine 156 is modified to N6-succinyllysine; alternate. Serine 159 carries the post-translational modification Phosphoserine. Glutamate 166 acts as the Proton acceptor in catalysis. At threonine 173 the chain carries Phosphothreonine. N6-acetyllysine; alternate is present on lysine 194. At lysine 194 the chain carries N6-succinyllysine; alternate. At lysine 194 the chain carries N6-methyllysine; alternate. Residue serine 198 is modified to Phosphoserine. Position 209 is a 3'-nitrotyrosine (tyrosine 209). The residue at position 212 (serine 212) is a Phosphoserine. Threonine 214 carries the post-translational modification Phosphothreonine. Serine 223 bears the Phosphoserine mark. Lysine 238 is modified (N6-acetyllysine).

The protein belongs to the triosephosphate isomerase family. Homodimer.

Its subcellular location is the cytoplasm. The enzyme catalyses dihydroxyacetone phosphate = methylglyoxal + phosphate. It catalyses the reaction D-glyceraldehyde 3-phosphate = dihydroxyacetone phosphate. The protein operates within carbohydrate degradation; glycolysis; D-glyceraldehyde 3-phosphate from glycerone phosphate: step 1/1. It functions in the pathway carbohydrate biosynthesis; gluconeogenesis. Functionally, triosephosphate isomerase is an extremely efficient metabolic enzyme that catalyzes the interconversion between dihydroxyacetone phosphate (DHAP) and D-glyceraldehyde-3-phosphate (G3P) in glycolysis and gluconeogenesis. In terms of biological role, it is also responsible for the non-negligible production of methylglyoxal a reactive cytotoxic side-product that modifies and can alter proteins, DNA and lipids. This Canis lupus familiaris (Dog) protein is Triosephosphate isomerase (TPI1).